The primary structure comprises 342 residues: Heat-inducible transcription repressor HrcA (342 aa).

Belongs to the HrcA family.

Its function is as follows. Negative regulator of class I heat shock genes (grpE-dnaK-dnaJ and groELS operons). Prevents heat-shock induction of these operons. In Onion yellows phytoplasma (strain OY-M), this protein is Heat-inducible transcription repressor HrcA.